A 276-amino-acid polypeptide reads, in one-letter code: Ribonuclease 3 (276 aa).

The interval 1-29 is disordered; it reads MRGTVSVPKKAEDAKADPPAKKKADTQAS. Positions 9 to 25 are enriched in basic and acidic residues; it reads KKAEDAKADPPAKKKAD. The 127-residue stretch at 31 to 157 folds into the RNase III domain; that stretch reads HTLLEGRLGY…VIGAVYLDQG (127 aa). Glu-70 contacts Mg(2+). The active site involves Asp-74. Asp-143 and Glu-146 together coordinate Mg(2+). Glu-146 is a catalytic residue. Residues 184–252 enclose the DRBM domain; the sequence is DWKTSLQELT…AESAWRSIRA (69 aa). The interval 227–276 is disordered; that stretch reads YGTGTGRSKKEAEQQAAESAWRSIRAAADERAKATADAVDADPDEASASA. Over residues 265-276 the composition is skewed to acidic residues; the sequence is VDADPDEASASA.

It belongs to the ribonuclease III family. In terms of assembly, homodimer. It depends on Mg(2+) as a cofactor.

The protein localises to the cytoplasm. The catalysed reaction is Endonucleolytic cleavage to 5'-phosphomonoester.. Its function is as follows. Digests double-stranded RNA. Involved in the processing of primary rRNA transcript to yield the immediate precursors to the large and small rRNAs (23S and 16S). Also processes some mRNAs, and tRNAs when they are encoded in the rRNA operon. May modulate key aspects of gene expression as its absence has extensive effects on the abundance of about 200 different transcripts. Probably processes pre-crRNA and tracrRNA of type II CRISPR loci if present in the organism. This chain is Ribonuclease 3 (rnc), found in Streptomyces coelicolor (strain ATCC BAA-471 / A3(2) / M145).